The sequence spans 80 residues: RNA-binding protein Hfq (80 aa).

Residues 10–69 (DPFLNVLRKEHIPVSIYLVNGIKLQGHIDSFDQYVVLLRNSVTQMVYKHAISTIVPGKAV) enclose the Sm domain.

This sequence belongs to the Hfq family. Homohexamer.

Its function is as follows. RNA chaperone that binds small regulatory RNA (sRNAs) and mRNAs to facilitate mRNA translational regulation in response to envelope stress, environmental stress and changes in metabolite concentrations. Also binds with high specificity to tRNAs. The sequence is that of RNA-binding protein Hfq from Nitrosomonas eutropha (strain DSM 101675 / C91 / Nm57).